Here is a 560-residue protein sequence, read N- to C-terminus: Formate--tetrahydrofolate ligase (560 aa).

69 to 76 serves as a coordination point for ATP; it reads TPAGEGKS.

It belongs to the formate--tetrahydrofolate ligase family.

It catalyses the reaction (6S)-5,6,7,8-tetrahydrofolate + formate + ATP = (6R)-10-formyltetrahydrofolate + ADP + phosphate. The protein operates within one-carbon metabolism; tetrahydrofolate interconversion. The chain is Formate--tetrahydrofolate ligase from Listeria monocytogenes serotype 4a (strain HCC23).